The sequence spans 369 residues: Biglycan (369 aa).

Residues 1–16 (MWPLWLVASLLALSQA) form the signal peptide. A propeptide spanning residues 17-37 (LPFEQKGFWDFTLDDGLPMLN) is cleaved from the precursor. Residues Ser-42 and Ser-48 are each glycosylated (O-linked (Xyl...) (glycosaminoglycan) serine). 2 cysteine pairs are disulfide-bonded: Cys-64-Cys-70 and Cys-68-Cys-77. LRR repeat units follow at residues 83 to 103 (KAVP…NNDI), 104 to 127 (SELR…NNKI), 128 to 151 (SKIH…KNHL), 152 to 172 (VEIP…DNRI), 173 to 196 (RKVP…GNPL), 197 to 221 (ENSG…EAKL), 222 to 242 (TGIP…HNKI), 243 to 266 (QAIE…HNQI), 267 to 290 (RMIE…NNKL), 291 to 313 (SRVP…TNNI), 314 to 343 (TKVG…NNPV), and 344 to 369 (PYWE…NYKK). Residues Asn-271 and Asn-312 are each glycosylated (N-linked (GlcNAc...) asparagine). Cys-322 and Cys-355 are oxidised to a cystine.

It belongs to the small leucine-rich proteoglycan (SLRP) family. SLRP class I subfamily. In terms of assembly, homodimer. Forms a ternary complex with MFAP2 and ELN. The two attached glycosaminoglycan chains can be either chondroitin sulfate or dermatan sulfate.

It localises to the secreted. It is found in the extracellular space. The protein resides in the extracellular matrix. Functionally, may be involved in collagen fiber assembly. The sequence is that of Biglycan (BGN) from Canis lupus familiaris (Dog).